Consider the following 432-residue polypeptide: Asparagine--tRNA ligase (432 aa).

It belongs to the class-II aminoacyl-tRNA synthetase family. Homodimer.

The protein resides in the cytoplasm. The enzyme catalyses tRNA(Asn) + L-asparagine + ATP = L-asparaginyl-tRNA(Asn) + AMP + diphosphate + H(+). The chain is Asparagine--tRNA ligase from Lactobacillus delbrueckii subsp. bulgaricus (strain ATCC 11842 / DSM 20081 / BCRC 10696 / JCM 1002 / NBRC 13953 / NCIMB 11778 / NCTC 12712 / WDCM 00102 / Lb 14).